Consider the following 460-residue polypeptide: Citrate synthase, peroxisomal (460 aa).

Ser21 is subject to Phosphoserine. Residues Lys218 and Lys239 each participate in a glycyl lysine isopeptide (Lys-Gly) (interchain with G-Cter in ubiquitin) cross-link. Active-site residues include His293 and His339. Residues Lys354 and Lys385 each participate in a glycyl lysine isopeptide (Lys-Gly) (interchain with G-Cter in ubiquitin) cross-link. Residue Asp394 is part of the active site. The short motif at 458 to 460 is the C-terminal peroxisome targeting signal (PTS1) element; that stretch reads SKL.

Belongs to the citrate synthase family. As to quaternary structure, interacts with F-box protein UCC1. Post-translationally, ubiquitinated by the E3 ubiquitin-protein ligase complex SCF(UCC1), which leads to its degradation by the proteasome. Ubiquitination is prevented by oxaloacetate, suggesting the existence of an oxaloacetate-dependent positive feedback loop that stabilizes CIT2.

Its subcellular location is the cytoplasm. The protein localises to the peroxisome. It catalyses the reaction oxaloacetate + acetyl-CoA + H2O = citrate + CoA + H(+). The protein operates within carbohydrate metabolism; tricarboxylic acid cycle; isocitrate from oxaloacetate: step 1/2. Peroxisomal citrate synthase involved in the citrate homeostasis. Catalyzes the condensation of acetyl coenzyme A and oxaloacetate to form citrate. Citrate synthase is the rate-limiting enzyme of the tricarboxylic acid (TCA) cycle. In Saccharomyces cerevisiae (strain ATCC 204508 / S288c) (Baker's yeast), this protein is Citrate synthase, peroxisomal.